The chain runs to 96 residues: Aspartyl/glutamyl-tRNA(Asn/Gln) amidotransferase subunit C (96 aa).

This sequence belongs to the GatC family. In terms of assembly, heterotrimer of A, B and C subunits.

The enzyme catalyses L-glutamyl-tRNA(Gln) + L-glutamine + ATP + H2O = L-glutaminyl-tRNA(Gln) + L-glutamate + ADP + phosphate + H(+). It catalyses the reaction L-aspartyl-tRNA(Asn) + L-glutamine + ATP + H2O = L-asparaginyl-tRNA(Asn) + L-glutamate + ADP + phosphate + 2 H(+). Functionally, allows the formation of correctly charged Asn-tRNA(Asn) or Gln-tRNA(Gln) through the transamidation of misacylated Asp-tRNA(Asn) or Glu-tRNA(Gln) in organisms which lack either or both of asparaginyl-tRNA or glutaminyl-tRNA synthetases. The reaction takes place in the presence of glutamine and ATP through an activated phospho-Asp-tRNA(Asn) or phospho-Glu-tRNA(Gln). This chain is Aspartyl/glutamyl-tRNA(Asn/Gln) amidotransferase subunit C, found in Bacillus velezensis (strain DSM 23117 / BGSC 10A6 / LMG 26770 / FZB42) (Bacillus amyloliquefaciens subsp. plantarum).